A 1706-amino-acid chain; its full sequence is Bifunctional hemolysin/adenylate cyclase (1706 aa).

Residues 1-399 form an a, catalytic region; that stretch reads MQQSHQAGYA…RRPSLGAVER (399 aa). 349-356 contributes to the ATP binding site; sequence AYGVAGKS. Residues 383 to 405 form a disordered region; that stretch reads VPASPGLRRPSLGAVERQDSGYD. The tract at residues 400-912 is b, Ala/Gly-rich; it reads QDSGYDSLDG…LKHSIKLDVI (513 aa). The tract at residues 500-698 is required for interaction with CyaC; sequence LSAAVFGLGE…SVVGAPVAVV (199 aa). N6-palmitoyl lysine attachment occurs at residues Lys860 and Lys983. Residues 913–1656 form a c region; it reads GGDGDDVVLA…RDADHRVEII (744 aa). Hemolysin-type calcium-binding repeat units lie at residues 1014–1031, 1032–1049, 1050–1067, 1155–1172, 1173–1190, 1279–1296, 1297–1314, 1315–1332, 1335–1352, 1411–1428, 1429–1446, 1447–1464, 1468–1484, 1537–1554, 1555–1572, 1573–1590, and 1603–1620; these read IGGA…DNFL, AGGS…NDTL, VGGE…DDVF, WGHD…DDIL, RGGL…NDIF, MGQG…DDLL, FGGD…NDTL, YGGL…NDWF, TQAR…VDTV, TGDA…ADVL, AGGE…DDQL, SGDA…DDWF, AANA…RDTV, IGDA…NDVL, SGGA…SDLL, SGDA…DDTY, and ESGG…ADQL. The d, Asp/Gly-rich stretch occupies residues 1657-1706; that stretch reads HAANQAVDQAGIEKLVEAMAQYPDPGAAAAAPPAARVPDTLMQSLAVNWR.

The protein in the N-terminal section; belongs to the adenylyl cyclase class-2 family. This sequence in the C-terminal section; belongs to the RTX prokaryotic toxin family. In terms of processing, released in a processed form. Post-translationally, palmitoylated at Lys-860 and Lys-983 by CyaC. The toxin only becomes active when modified in position Lys-983: palmitoylation is required for efficient membrane insertion and pore formation of the acylated Hemolysin chain.

The protein localises to the secreted. It is found in the host cell membrane. It catalyses the reaction ATP = 3',5'-cyclic AMP + diphosphate. Activated by host calmodulin. Bifunctional adenylate cyclase toxin-hemolysin that plays a crucial role in host colonization. It causes whooping cough by acting on mammalian cells by elevating cAMP-concentration and thus disrupts normal cell function. In terms of biological role, adenylate cyclase that is activated by host intracellular calmodulin and catalyzes un-regulated conversion of ATP to cAMP, thereby impairing microbicidal functions of immune effector cells and inducing apoptosis of lung macrophages. Its function is as follows. Hemolysin that forms small cation-selective membrane channels, leading to hemolytic activity. The hemolytic activity of CyaA is weak compared with that of the HlyA of E.coli. This Bordetella pertussis (strain Tohama I / ATCC BAA-589 / NCTC 13251) protein is Bifunctional hemolysin/adenylate cyclase (cya).